The following is a 198-amino-acid chain: ATP-dependent Clp protease proteolytic subunit (198 aa).

Ser-98 (nucleophile) is an active-site residue. His-123 is a catalytic residue.

Belongs to the peptidase S14 family. In terms of assembly, fourteen ClpP subunits assemble into 2 heptameric rings which stack back to back to give a disk-like structure with a central cavity, resembling the structure of eukaryotic proteasomes.

The protein localises to the cytoplasm. It catalyses the reaction Hydrolysis of proteins to small peptides in the presence of ATP and magnesium. alpha-casein is the usual test substrate. In the absence of ATP, only oligopeptides shorter than five residues are hydrolyzed (such as succinyl-Leu-Tyr-|-NHMec, and Leu-Tyr-Leu-|-Tyr-Trp, in which cleavage of the -Tyr-|-Leu- and -Tyr-|-Trp bonds also occurs).. Cleaves peptides in various proteins in a process that requires ATP hydrolysis. Has a chymotrypsin-like activity. Plays a major role in the degradation of misfolded proteins. This is ATP-dependent Clp protease proteolytic subunit from Levilactobacillus brevis (strain ATCC 367 / BCRC 12310 / CIP 105137 / JCM 1170 / LMG 11437 / NCIMB 947 / NCTC 947) (Lactobacillus brevis).